Consider the following 488-residue polypeptide: Aspartyl/glutamyl-tRNA(Asn/Gln) amidotransferase subunit B (488 aa).

It belongs to the GatB/GatE family. GatB subfamily. As to quaternary structure, heterotrimer of A, B and C subunits.

The catalysed reaction is L-glutamyl-tRNA(Gln) + L-glutamine + ATP + H2O = L-glutaminyl-tRNA(Gln) + L-glutamate + ADP + phosphate + H(+). It carries out the reaction L-aspartyl-tRNA(Asn) + L-glutamine + ATP + H2O = L-asparaginyl-tRNA(Asn) + L-glutamate + ADP + phosphate + 2 H(+). Its function is as follows. Allows the formation of correctly charged Asn-tRNA(Asn) or Gln-tRNA(Gln) through the transamidation of misacylated Asp-tRNA(Asn) or Glu-tRNA(Gln) in organisms which lack either or both of asparaginyl-tRNA or glutaminyl-tRNA synthetases. The reaction takes place in the presence of glutamine and ATP through an activated phospho-Asp-tRNA(Asn) or phospho-Glu-tRNA(Gln). This chain is Aspartyl/glutamyl-tRNA(Asn/Gln) amidotransferase subunit B, found in Chlamydia trachomatis serovar A (strain ATCC VR-571B / DSM 19440 / HAR-13).